A 190-amino-acid polypeptide reads, in one-letter code: Xanthine phosphoribosyltransferase 2 (190 aa).

Residues Leu-20 and Asn-27 each contribute to the xanthine site. 129–133 (ANGCA) lines the 5-phospho-alpha-D-ribose 1-diphosphate pocket. Lys-157 lines the xanthine pocket.

It belongs to the purine/pyrimidine phosphoribosyltransferase family. Xpt subfamily. In terms of assembly, homodimer.

It localises to the cytoplasm. It catalyses the reaction XMP + diphosphate = xanthine + 5-phospho-alpha-D-ribose 1-diphosphate. The protein operates within purine metabolism; XMP biosynthesis via salvage pathway; XMP from xanthine: step 1/1. Functionally, converts the preformed base xanthine, a product of nucleic acid breakdown, to xanthosine 5'-monophosphate (XMP), so it can be reused for RNA or DNA synthesis. The sequence is that of Xanthine phosphoribosyltransferase 2 from Clostridium botulinum (strain ATCC 19397 / Type A).